A 740-amino-acid polypeptide reads, in one-letter code: Catalase-peroxidase (740 aa).

Positions 1 to 14 are enriched in basic and acidic residues; that stretch reads MTENHDAIVTDAKS. The disordered stretch occupies residues 1–21; the sequence is MTENHDAIVTDAKSEGSGGCP. The tryptophyl-tyrosyl-methioninium (Trp-Tyr) (with M-257) cross-link spans 108-231; that stretch reads WHSAGTYRIS…LGAVQMGLIY (124 aa). H109 serves as the catalytic Proton acceptor. The segment at residues 231-257 is a cross-link (tryptophyl-tyrosyl-methioninium (Tyr-Met) (with W-108)); that stretch reads YVNPEGPNGNPDPIAAARDIRETFRRM. H272 lines the heme b pocket.

This sequence belongs to the peroxidase family. Peroxidase/catalase subfamily. As to quaternary structure, homodimer. The cofactor is heme b. In terms of processing, formation of the three residue Trp-Tyr-Met cross-link is important for the catalase, but not the peroxidase activity of the enzyme.

The enzyme catalyses H2O2 + AH2 = A + 2 H2O. It carries out the reaction 2 H2O2 = O2 + 2 H2O. Its function is as follows. Bifunctional enzyme with both catalase and broad-spectrum peroxidase activity. This is Catalase-peroxidase from Streptomyces reticuli.